A 351-amino-acid polypeptide reads, in one-letter code: Molybdenum import ATP-binding protein ModC (351 aa).

The region spanning 1–229 is the ABC transporter domain; that stretch reads MLEINIHQQL…DILADWQSET (229 aa). 31 to 38 is an ATP binding site; it reads GRSGAGKS. Residues 290-351 enclose the Mop domain; the sequence is HSSIRNILNG…IYVQIKSVSL (62 aa).

The protein belongs to the ABC transporter superfamily. Molybdate importer (TC 3.A.1.8) family. The complex is composed of two ATP-binding proteins (ModC), two transmembrane proteins (ModB) and a solute-binding protein (ModA).

Its subcellular location is the cell inner membrane. The enzyme catalyses molybdate(out) + ATP + H2O = molybdate(in) + ADP + phosphate + H(+). Part of the ABC transporter complex ModABC involved in molybdenum import. Responsible for energy coupling to the transport system. This chain is Molybdenum import ATP-binding protein ModC, found in Haemophilus ducreyi (strain 35000HP / ATCC 700724).